A 286-amino-acid chain; its full sequence is MGREVVEVLMDRNADVSSARVHVAPKIAAEETDEEFEVKECTEEKSLSENAPNVGSAERVGAQKSPKTRNGNAKVSKQDAPLLAVRKPLQPENKKHIDDEDNCSIASSVATSMRMGKSGLTYGSAPTFRSAQRAEKRKEYYQKLEEKNQALEAERNELEQRQKDEQEAALKQLRKNLKFKAKPVPNFYYEAPPAKPELKKLPLTRPKSPKLILSRRKSFSDAVSSSSREEILKTVSNRNRHSTGTVQNKDDDHRNKNTNAAHDSPRVRSGKGKSGLKPVNESSEEA.

The segment at 31-101 (ETDEEFEVKE…ENKKHIDDED (71 aa)) is disordered. Residue Thr-32 is modified to Phosphothreonine. The span at 38–47 (VKECTEEKSL) shows a compositional bias: basic and acidic residues. The stretch at 131-182 (AQRAEKRKEYYQKLEEKNQALEAERNELEQRQKDEQEAALKQLRKNLKFKAK) forms a coiled coil. Residues 186 to 286 (NFYYEAPPAK…KPVNESSEEA (101 aa)) are disordered. The segment covering 234–247 (TVSNRNRHSTGTVQ) has biased composition (polar residues).

The protein belongs to the TPX2 family.

The protein resides in the cytoplasm. Its subcellular location is the cytoskeleton. Its function is as follows. Microtubule-associated protein (MAP) that regulates the orientation of interphase cortical microtubules. Modulates both rotational polarity and anisotropic cell expansion during organ growth. Promotes clockwise root and etiolated hypocotyls coiling, clockwise leaf curling, but left-handed petiole twisting. The sequence is that of Protein WVD2-like 1 (WDL1) from Arabidopsis thaliana (Mouse-ear cress).